Reading from the N-terminus, the 444-residue chain is Probable ribonuclease FAU-1 (444 aa).

The protein belongs to the FAU-1 family.

Its function is as follows. Probable RNase involved in rRNA stability through maturation and/or degradation of precursor rRNAs. Binds to RNA in loop regions with AU-rich sequences. This Pyrobaculum arsenaticum (strain DSM 13514 / JCM 11321 / PZ6) protein is Probable ribonuclease FAU-1.